A 261-amino-acid polypeptide reads, in one-letter code: Succinate dehydrogenase iron-sulfur subunit (261 aa).

Positions 1-23 (MAELRLPPNSVVKKGKEHKEQEE) are disordered. Positions 28 to 119 (RKVKIYRYDP…DIKIYPLPHM (92 aa)) constitute a 2Fe-2S ferredoxin-type domain. Residues C80, C85, and C100 each contribute to the [2Fe-2S] cluster site. In terms of domain architecture, 4Fe-4S ferredoxin-type spans 161–191 (GREKLDGLYECILCACCSTSCPSYWWNGDKY). C171, C174, and C177 together coordinate [4Fe-4S] cluster. [3Fe-4S] cluster is bound at residue C181. An a ubiquinone-binding site is contributed by W186. 2 residues coordinate [3Fe-4S] cluster: C228 and C234. C238 lines the [4Fe-4S] cluster pocket.

The protein belongs to the succinate dehydrogenase/fumarate reductase iron-sulfur protein family. Part of an enzyme complex containing four subunits: a flavoprotein, an iron-sulfur, cytochrome b-556, and a hydrophobic anchor protein. [2Fe-2S] cluster is required as a cofactor. It depends on [3Fe-4S] cluster as a cofactor. The cofactor is [4Fe-4S] cluster.

The catalysed reaction is a quinone + succinate = fumarate + a quinol. Its pathway is carbohydrate metabolism; tricarboxylic acid cycle; fumarate from succinate (bacterial route): step 1/1. The protein is Succinate dehydrogenase iron-sulfur subunit (sdhB) of Rickettsia felis (strain ATCC VR-1525 / URRWXCal2) (Rickettsia azadi).